Here is a 154-residue protein sequence, read N- to C-terminus: Transcription antitermination protein NusB (154 aa).

Residues 132–154 form a disordered region; the sequence is KDKQSPQSTPLDDSDKDESDQTN. Positions 143–154 are enriched in acidic residues; sequence DDSDKDESDQTN.

The protein belongs to the NusB family.

In terms of biological role, involved in transcription antitermination. Required for transcription of ribosomal RNA (rRNA) genes. Binds specifically to the boxA antiterminator sequence of the ribosomal RNA (rrn) operons. This chain is Transcription antitermination protein NusB, found in Bifidobacterium animalis subsp. lactis (strain AD011).